Consider the following 282-residue polypeptide: Phosphatidylserine decarboxylase proenzyme (282 aa).

Catalysis depends on charge relay system; for autoendoproteolytic cleavage activity residues D88, H144, and S247. The active-site Schiff-base intermediate with substrate; via pyruvic acid; for decarboxylase activity is S247. A Pyruvic acid (Ser); by autocatalysis modification is found at S247.

Belongs to the phosphatidylserine decarboxylase family. PSD-B subfamily. Prokaryotic type I sub-subfamily. Heterodimer of a large membrane-associated beta subunit and a small pyruvoyl-containing alpha subunit. Pyruvate serves as cofactor. Post-translationally, is synthesized initially as an inactive proenzyme. Formation of the active enzyme involves a self-maturation process in which the active site pyruvoyl group is generated from an internal serine residue via an autocatalytic post-translational modification. Two non-identical subunits are generated from the proenzyme in this reaction, and the pyruvate is formed at the N-terminus of the alpha chain, which is derived from the carboxyl end of the proenzyme. The autoendoproteolytic cleavage occurs by a canonical serine protease mechanism, in which the side chain hydroxyl group of the serine supplies its oxygen atom to form the C-terminus of the beta chain, while the remainder of the serine residue undergoes an oxidative deamination to produce ammonia and the pyruvoyl prosthetic group on the alpha chain. During this reaction, the Ser that is part of the protease active site of the proenzyme becomes the pyruvoyl prosthetic group, which constitutes an essential element of the active site of the mature decarboxylase.

It is found in the cell membrane. It catalyses the reaction a 1,2-diacyl-sn-glycero-3-phospho-L-serine + H(+) = a 1,2-diacyl-sn-glycero-3-phosphoethanolamine + CO2. The protein operates within phospholipid metabolism; phosphatidylethanolamine biosynthesis; phosphatidylethanolamine from CDP-diacylglycerol: step 2/2. Functionally, catalyzes the formation of phosphatidylethanolamine (PtdEtn) from phosphatidylserine (PtdSer). The chain is Phosphatidylserine decarboxylase proenzyme from Xanthomonas campestris pv. campestris (strain 8004).